Consider the following 436-residue polypeptide: 3-ketoacyl-CoA thiolase (436 aa).

The active-site Acyl-thioester intermediate is Cys-99. Active-site proton acceptor residues include His-392 and Cys-422.

The protein belongs to the thiolase-like superfamily. Thiolase family. Heterotetramer of two alpha chains (FadJ) and two beta chains (FadI).

The protein localises to the cytoplasm. The enzyme catalyses an acyl-CoA + acetyl-CoA = a 3-oxoacyl-CoA + CoA. It participates in lipid metabolism; fatty acid beta-oxidation. Catalyzes the final step of fatty acid oxidation in which acetyl-CoA is released and the CoA ester of a fatty acid two carbons shorter is formed. This chain is 3-ketoacyl-CoA thiolase, found in Shewanella putrefaciens (strain CN-32 / ATCC BAA-453).